A 201-amino-acid chain; its full sequence is 3-isopropylmalate dehydratase small subunit (201 aa).

Belongs to the LeuD family. LeuD type 1 subfamily. In terms of assembly, heterodimer of LeuC and LeuD.

The enzyme catalyses (2R,3S)-3-isopropylmalate = (2S)-2-isopropylmalate. It functions in the pathway amino-acid biosynthesis; L-leucine biosynthesis; L-leucine from 3-methyl-2-oxobutanoate: step 2/4. In terms of biological role, catalyzes the isomerization between 2-isopropylmalate and 3-isopropylmalate, via the formation of 2-isopropylmaleate. The protein is 3-isopropylmalate dehydratase small subunit of Brucella abortus (strain S19).